A 496-amino-acid chain; its full sequence is Probable uroporphyrinogen-III C-methyltransferase (496 aa).

Belongs to the precorrin methyltransferase family.

It carries out the reaction uroporphyrinogen III + 2 S-adenosyl-L-methionine = precorrin-2 + 2 S-adenosyl-L-homocysteine + H(+). In terms of biological role, siroheme synthase involved in methionine biosynthesis. This chain is Probable uroporphyrinogen-III C-methyltransferase, found in Schizosaccharomyces pombe (strain 972 / ATCC 24843) (Fission yeast).